Here is a 402-residue protein sequence, read N- to C-terminus: MYGITSTANSTGNQSYANRLFIYEVVGLGGDGRNENSLVRKSGTTFITVPYARMNQEMQRITKLGGKIVSIRPAEDAAQIVSEGQSSAQASAQSPMASSTKIVHPKTTDTSVPVNIYRPKTPFLGKCIENYELVDEGGSGTVRHVTFDISEGDLRYLEGQSIGIIPPGEDKNGKPHKLRLYSIASTRHGDMEDNKTVSLCVRQLEYQDPESGETVYGVCSTYLCNLPVGTDDVKITGPVGKEMLLPDDEDATVVMLATGTGIAPFRAFLWRMFKEQHEDYKFKGKAWLIFGVPYTANILYKDDFEKMAAENPDNFRLTYAISREQKTADGGKVYVQSRVSEYADELFEMIQKPNTHVYMCGLKGMQPPIDETFTAEAEKRGLNWEEMRRSMKKEHRWHVEVY.

One can recognise a CpcD-like domain in the interval Asn18 to Ala74. The interval Ile80 to Lys101 is disordered. Residues Gln85–Ser99 show a composition bias toward low complexity. The 126-residue stretch at Lys120–Leu245 folds into the FAD-binding FR-type domain. FAD-binding positions include Arg179 to Ser182, Cys200 to Arg202, Tyr206, Val218 to Ser220, and Thr260. Residues Ser182 and Arg202 each contribute to the NADP(+) site. Residues Thr260, Val292–Pro293, Ser322–Arg323, Lys332, Lys332–Gln336, Gly361–Leu362, and Glu400 contribute to the NADP(+) site.

The protein belongs to the ferredoxin--NADP reductase type 1 family. FAD serves as cofactor.

The protein resides in the cellular thylakoid membrane. It carries out the reaction 2 reduced [2Fe-2S]-[ferredoxin] + NADP(+) + H(+) = 2 oxidized [2Fe-2S]-[ferredoxin] + NADPH. The chain is Ferredoxin--NADP reductase (petH) from Picosynechococcus sp. (strain ATCC 27264 / PCC 7002 / PR-6) (Agmenellum quadruplicatum).